The following is a 489-amino-acid chain: FAD-linked oxidoreductase tazG (489 aa).

The signal sequence occupies residues 1-17 (MVAFSAILQTALGLSAA). N-linked (GlcNAc...) asparagine glycosylation occurs at N38. An FAD-binding PCMH-type domain is found at 55-224 (APSYGAGAIK…TSATYRLPEV (170 aa)). N242 and N306 each carry an N-linked (GlcNAc...) asparagine glycan.

Belongs to the oxygen-dependent FAD-linked oxidoreductase family. FAD serves as cofactor.

It participates in secondary metabolite biosynthesis. Functionally, FAD-linked oxidoreductase; part of the gene cluster that mediates the biosynthesis of azaterrilone A and other azaphilones, a class of fungal metabolites characterized by a highly oxygenated pyrano-quinone bicyclic core and exhibiting a broad range of bioactivities. The first step of the pathway begins with the non-reducing polyketide synthase tazA that assembles one acetyl-CoA starter unit, five malonyl-CoA units, and catalyzes a series of Claisen condensations, methylation, PT-mediated cyclization, and finally releases the first hexaketide precursor through the R-domain. The tazA product then undergoes reduction on its terminal ketone and the following pyran-ring formation by yet undetermined enzyme(s). Dehydration and enoyl reduction, possibly involving the trans-enoyl reductase tazE leads to the next intermediate. TazD is predicted as an acetyltransferase and might catalyze the acetylation steps leading to the synthesis of azaterrilone A. Azaterrilone A is not the final product of the taz pathway and both the highly reducing polyketide synthase tazB and the dual enzyme tazHJ catalyze late steps of the pathway, leading to the production of the 2 final stereoisomers that contain additional polyketide modification whose structures have still to be determined. In Aspergillus terreus (strain NIH 2624 / FGSC A1156), this protein is FAD-linked oxidoreductase tazG.